Consider the following 414-residue polypeptide: WW domain-containing oxidoreductase (414 aa).

The disordered stretch occupies residues 1–23 (MAALRYAGLDDTDSEDELPPGWE). Phosphothreonine is present on threonine 12. Serine 14 carries the post-translational modification Phosphoserine. The WW 1 domain maps to 16–49 (DELPPGWEERTTKDGWVYYANHTEEKTQWEHPKT). Position 33 is a phosphotyrosine (tyrosine 33). The short motif at 50–55 (GKRKRV) is the Nuclear localization signal element. The 34-residue stretch at 57-90 (GDLPYGWEQETDENGQVFFVDHINKRTTYLDPRL) folds into the WW 2 domain. Residues 125–414 (KVVVVTGANS…IQERLGSQSG (290 aa)) form an interaction with MAPT region. 131–137 (GANSGIG) contacts NADP(+). The mediates targeting to the mitochondria stretch occupies residues 209 to 273 (CNAATFALPW…RFTDINDSLG (65 aa)). Substrate is bound at residue serine 260. Tyrosine 287 bears the Phosphotyrosine; by TNK2 mark. Tyrosine 293 (proton acceptor) is an active-site residue.

This sequence belongs to the short-chain dehydrogenases/reductases (SDR) family. Interacts with TP53, p73/TP73 and MAPK8. Interacts with MAPT/TAU, RUNX2 and HYAL2. Forms a ternary complex with TP53 and MDM2. Interacts with ERBB4, LITAF and WBP1. Interacts with DVL1, DVL2 and DVL3. May interact with FAM189B and SCOTIN. Interacts with TNK2. Interacts with TMEM207. Interacts (via WW domain) with VOPP1. Phosphorylated upon genotoxic stress. Phosphorylation of Tyr-33 regulates interaction with TP53, TP73 and MAPK8. May also regulate proapoptotic activity. Phosphorylation by TNK2 is associated with polyubiquitination and degradation. Post-translationally, ubiquitinated when phosphorylated by TNK2, leading to its degradation. Widely expressed. Strongly expressed in testis, prostate, and ovary. Overexpressed in cancer cell lines. Isoform 5 and isoform 6 may only be expressed in tumor cell lines.

The protein localises to the cytoplasm. It is found in the nucleus. Its subcellular location is the mitochondrion. The protein resides in the golgi apparatus. It localises to the lysosome. Functionally, putative oxidoreductase. Acts as a tumor suppressor and plays a role in apoptosis. Required for normal bone development. May function synergistically with p53/TP53 to control genotoxic stress-induced cell death. Plays a role in TGFB1 signaling and TGFB1-mediated cell death. May also play a role in tumor necrosis factor (TNF)-mediated cell death. Inhibits Wnt signaling, probably by sequestering DVL2 in the cytoplasm. This Homo sapiens (Human) protein is WW domain-containing oxidoreductase (WWOX).